Here is a 263-residue protein sequence, read N- to C-terminus: Type II restriction enzyme TaqI (263 aa).

Post-translationally, only 15% of purified enzyme (upon expression in E.coli) can be sequenced, suggesting the remainder has a blocked N-terminus.

It catalyses the reaction Endonucleolytic cleavage of DNA to give specific double-stranded fragments with terminal 5'-phosphates.. In terms of biological role, a P subtype restriction enzyme that recognizes the double-stranded sequence 5'-TCGA-3' and cleaves after T-1. The sequence is that of Type II restriction enzyme TaqI (taqIR) from Thermus aquaticus.